The sequence spans 166 residues: Interferon gamma (166 aa).

The N-terminal stretch at 1–23 is a signal peptide; sequence MNYTSFILAFQLCAILGSSTYYC. Position 24 is a pyrrolidone carboxylic acid (glutamine 24). Residues asparagine 39 and asparagine 106 are each glycosylated (N-linked (GlcNAc...) asparagine). The interval 147 to 166 is disordered; sequence ANLRKRKRSQNPFRGRRALQ. The span at 148-166 shows a compositional bias: basic residues; the sequence is NLRKRKRSQNPFRGRRALQ.

Belongs to the type II (or gamma) interferon family. In terms of assembly, homodimer. Interacts with IFNGR1 (via extracellular domain); this interaction promotes IFNGR1 dimerization. Released primarily from activated T lymphocytes.

It is found in the secreted. Type II interferon produced by immune cells such as T-cells and NK cells that plays crucial roles in antimicrobial, antiviral, and antitumor responses by activating effector immune cells and enhancing antigen presentation. Primarily signals through the JAK-STAT pathway after interaction with its receptor IFNGR1 to affect gene regulation. Upon IFNG binding, IFNGR1 intracellular domain opens out to allow association of downstream signaling components JAK2, JAK1 and STAT1, leading to STAT1 activation, nuclear translocation and transcription of IFNG-regulated genes. Many of the induced genes are transcription factors such as IRF1 that are able to further drive regulation of a next wave of transcription. Plays a role in class I antigen presentation pathway by inducing a replacement of catalytic proteasome subunits with immunoproteasome subunits. In turn, increases the quantity, quality, and repertoire of peptides for class I MHC loading. Increases the efficiency of peptide generation also by inducing the expression of activator PA28 that associates with the proteasome and alters its proteolytic cleavage preference. Up-regulates as well MHC II complexes on the cell surface by promoting expression of several key molecules such as cathepsins B/CTSB, H/CTSH, and L/CTSL. Participates in the regulation of hematopoietic stem cells during development and under homeostatic conditions by affecting their development, quiescence, and differentiation. This is Interferon gamma (IFNG) from Equus asinus (Donkey).